Consider the following 245-residue polypeptide: Thiopurine S-methyltransferase (245 aa).

An S-adenosyl-L-methionine-binding site is contributed by 29 to 40; sequence WQEKWVNHKTGF. Substrate is bound at residue F40. Position 58 is an N6-acetyllysine (K58). S-adenosyl-L-methionine-binding residues include L69, E90, and R152.

It belongs to the class I-like SAM-binding methyltransferase superfamily. TPMT family. In terms of assembly, monomer.

It localises to the cytoplasm. It carries out the reaction S-adenosyl-L-methionine + a thiopurine = S-adenosyl-L-homocysteine + a thiopurine S-methylether.. This is Thiopurine S-methyltransferase (TPMT) from Bos taurus (Bovine).